Reading from the N-terminus, the 692-residue chain is MARKTPIEKVRNIGIAAHIDAGKTTTTERILYYTGISHKIGEVHEGAATMDWMDQEKERGITITSAATTCFWKDHQINIIDTPGHVDFTIEVERSMRVLDGAVAVFCAVGGVQPQSETVWRQANKYHVPRIVFVNKMDRIGADFYNVENQIRERLKANPVPIQIPIGAEDNFRGVVDLVEMKGIVWDDETMGAKYEVIDIPEELREKAEEYREKLVEAVAETDEELLDKYLGGEELTTEEIKKGIKKGTLDMTITPMLCGSAFKNKGVQTLLDAVVDYLPAPTEVSWIKGIDPKTGEEVSVESTDNGPFAALAFKIMTDPFVGQLSFIRVYRGQIASGSYVLNSTKEKKERVGRLLKMHANKREEIKELPAGEIGAVVGLKYTLTGDTLCDESHPVILEKMEFPEPVISVAVEPKTKADQEKMATALAKLAEEDPSFRVHTDEETGQTIISGMGELHLEIIVDRMKREFKVDAEVGQPQVAYRETIKAPVDQEYKYAKQSGGRGQYGHVFIKLEPQEPGKGYEFVNNITGGVIPKEYIPAVDKGIQEAMQNGVLAGYPVVDIKATLYDGSYHDVDSSEMAFKIAGSMAFKEAAKKANPILLEPIMKVEVEVPEEYMGDVIGDINRRRGQVQSMEDRAGNKIVTAMVPLAEMFGYSTDLRSFTQGRGTYSMEFDHYEEVPKNVADEIIKKRNG.

Residues 8–283 (EKVRNIGIAA…AVVDYLPAPT (276 aa)) form the tr-type G domain. Residues 17–24 (AHIDAGKT), 81–85 (DTPGH), and 135–138 (NKMD) contribute to the GTP site.

The protein belongs to the TRAFAC class translation factor GTPase superfamily. Classic translation factor GTPase family. EF-G/EF-2 subfamily.

The protein resides in the cytoplasm. In terms of biological role, catalyzes the GTP-dependent ribosomal translocation step during translation elongation. During this step, the ribosome changes from the pre-translocational (PRE) to the post-translocational (POST) state as the newly formed A-site-bound peptidyl-tRNA and P-site-bound deacylated tRNA move to the P and E sites, respectively. Catalyzes the coordinated movement of the two tRNA molecules, the mRNA and conformational changes in the ribosome. The protein is Elongation factor G of Nitratiruptor sp. (strain SB155-2).